We begin with the raw amino-acid sequence, 467 residues long: Ribulose bisphosphate carboxylase large chain (467 aa).

An N6,N6,N6-trimethyllysine modification is found at lysine 5. Asparagine 114 and threonine 164 together coordinate substrate. Catalysis depends on lysine 166, which acts as the Proton acceptor. Lysine 168 contacts substrate. Mg(2+) is bound by residues lysine 192, aspartate 194, and glutamate 195. Lysine 192 is subject to N6-carboxylysine. Residue histidine 285 is the Proton acceptor of the active site. Substrate is bound by residues arginine 286, histidine 318, and serine 370.

Belongs to the RuBisCO large chain family. Type I subfamily. In terms of assembly, heterohexadecamer of 8 large chains and 8 small chains; disulfide-linked. The disulfide link is formed within the large subunit homodimers. Mg(2+) serves as cofactor. The disulfide bond which can form in the large chain dimeric partners within the hexadecamer appears to be associated with oxidative stress and protein turnover.

Its subcellular location is the plastid. It is found in the chloroplast. It catalyses the reaction 2 (2R)-3-phosphoglycerate + 2 H(+) = D-ribulose 1,5-bisphosphate + CO2 + H2O. The enzyme catalyses D-ribulose 1,5-bisphosphate + O2 = 2-phosphoglycolate + (2R)-3-phosphoglycerate + 2 H(+). RuBisCO catalyzes two reactions: the carboxylation of D-ribulose 1,5-bisphosphate, the primary event in carbon dioxide fixation, as well as the oxidative fragmentation of the pentose substrate in the photorespiration process. Both reactions occur simultaneously and in competition at the same active site. The sequence is that of Ribulose bisphosphate carboxylase large chain from Scutellaria bolanderi (Sierra skullcap).